The chain runs to 248 residues: Adenylate kinase (248 aa).

37 to 42 is a binding site for ATP; sequence GAGKGT. The NMP stretch occupies residues 57–86; it reads SPGNLLREEMNRNSPITAQIKDYVSKGQLV. AMP contacts are provided by residues R63, 84-86, 111-114, and Q118; these read QLV and GFPR. Residues 149-181 are LID; that stretch reads GRRFDPITGNTYHIIYDPPPPDIADRVVVRTDD. R150 contributes to the ATP binding site. Residues R178 and R189 each contribute to the AMP site.

It belongs to the adenylate kinase family. In terms of assembly, monomer.

The protein localises to the cytoplasm. It catalyses the reaction AMP + ATP = 2 ADP. In terms of biological role, catalyzes the reversible transfer of the terminal phosphate group between ATP and AMP. Plays an important role in cellular energy homeostasis and in adenine nucleotide metabolism. The polypeptide is Adenylate kinase (Giardia intestinalis (Giardia lamblia)).